Consider the following 225-residue polypeptide: 2-C-methyl-D-erythritol 4-phosphate cytidylyltransferase (225 aa).

Belongs to the IspD/TarI cytidylyltransferase family. IspD subfamily.

The catalysed reaction is 2-C-methyl-D-erythritol 4-phosphate + CTP + H(+) = 4-CDP-2-C-methyl-D-erythritol + diphosphate. It functions in the pathway isoprenoid biosynthesis; isopentenyl diphosphate biosynthesis via DXP pathway; isopentenyl diphosphate from 1-deoxy-D-xylulose 5-phosphate: step 2/6. Catalyzes the formation of 4-diphosphocytidyl-2-C-methyl-D-erythritol from CTP and 2-C-methyl-D-erythritol 4-phosphate (MEP). In Cereibacter sphaeroides (strain ATCC 17029 / ATH 2.4.9) (Rhodobacter sphaeroides), this protein is 2-C-methyl-D-erythritol 4-phosphate cytidylyltransferase.